Here is a 302-residue protein sequence, read N- to C-terminus: Gap junction delta-2 protein (302 aa).

Residues 1-19 (MGEWTILERLLEAAVQQHS) are Cytoplasmic-facing. A helical transmembrane segment spans residues 20–42 (TMIGRILLTVVVIFRILVVAIVG). Topologically, residues 43 to 75 (ETVYDDEQTMFVCNTLQPGCNQACYDKAFPISH) are extracellular. The chain crosses the membrane as a helical span at residues 76–98 (IRYWVFQIIMVCTPSLCFITYSV). Over 99 to 177 (HQSSKQRERQ…KIRRQEGISR (79 aa)) the chain is Cytoplasmic. A helical membrane pass occupies residues 178 to 200 (FYIIQVVFRNALEIGFLMGQYFL). The Extracellular portion of the chain corresponds to 201-232 (YGFKVPSMYECNRYPCVKMVECYVSRPTEKTV). Residues 233-255 (FLVFMFAVSGLCVILNLAELNHL) form a helical membrane-spanning segment. Over 256-302 (GWRKIKTAVRGAQERRKSIYEIRNKDSPHRIGVPNFGRTQSSDSAYV) the chain is Cytoplasmic.

This sequence belongs to the connexin family. Delta-type subfamily. As to quaternary structure, a connexon is composed of a hexamer of connexins. In terms of tissue distribution, retinal specific.

The protein resides in the cell membrane. It localises to the cell junction. It is found in the gap junction. Its function is as follows. One gap junction consists of a cluster of closely packed pairs of transmembrane channels, the connexons, through which materials of low MW diffuse from one cell to a neighboring cell. The sequence is that of Gap junction delta-2 protein from Leucoraja erinaceus (Little skate).